The primary structure comprises 191 residues: GDP-mannose pyrophosphatase (191 aa).

GDP-alpha-D-mannose contacts are provided by residues Tyr-17, 38-40 (KRE), Arg-67, and 85-87 (AGL). The region spanning 43–180 (DRGNGATILL…EIRDGKTVLL (138 aa)) is the Nudix hydrolase domain. Residues Ala-85, Glu-100, and Glu-104 each coordinate Mg(2+). Positions 86–106 (GLLDNDEPEVCIRKEAIEETG) match the Nudix box motif. GDP-alpha-D-mannose-binding positions include Glu-104, Glu-127, 150–151 (DE), and Lys-176. Residue Glu-151 coordinates Mg(2+).

The protein belongs to the Nudix hydrolase family. NudK subfamily. Homodimer. Mg(2+) is required as a cofactor.

It carries out the reaction GDP-alpha-D-mannose + H2O = alpha-D-mannose 1-phosphate + GMP + 2 H(+). Nucleoside diphosphate sugar hydrolase that hydrolyzes GDP-mannose as its preferred substrate, yielding GMP and mannose-1-phosphate. This is GDP-mannose pyrophosphatase (nudK) from Escherichia coli (strain UTI89 / UPEC).